We begin with the raw amino-acid sequence, 418 residues long: Lysophosphatidic acid phosphatase type 6 (418 aa).

The N-terminal 25 residues, 1-25, are a transit peptide targeting the mitochondrion; it reads MRVWVPVGVLTSLAYCFHQRRVALA. The tract at residues 51 to 161 is substrate binding; that stretch reads RHGARSPLKP…VFIRSTNMFR (111 aa). The Nucleophile role is filled by histidine 52. Residue aspartate 327 is the Proton donor of the active site.

Belongs to the histidine acid phosphatase family. In terms of assembly, monomer.

It is found in the mitochondrion. It catalyses the reaction a phosphate monoester + H2O = an alcohol + phosphate. The catalysed reaction is 1-(9Z-octadecenoyl)-sn-glycero-3-phosphate + H2O = 1-(9Z-octadecenoyl)-sn-glycerol + phosphate. In terms of biological role, hydrolyzes lysophosphatidic acid (LPA) containing a medium length fatty acid chain to the corresponding monoacylglycerol. Has highest activity with lysophosphatidic acid containing myristate (C14:0), monounsaturated oleate (C18:1) or palmitate (C16:0), and lower activity with C18:0 and C6:0 lysophosphatidic acid. This chain is Lysophosphatidic acid phosphatase type 6 (Acp6), found in Mus musculus (Mouse).